Reading from the N-terminus, the 729-residue chain is Fatty acid oxidation complex subunit alpha (729 aa).

Residues 1–189 (MLYKGDTLYL…KIGLVDGVVK (189 aa)) form an enoyl-CoA hydratase/isomerase region. Aspartate 296 contributes to the substrate binding site. A 3-hydroxyacyl-CoA dehydrogenase region spans residues 311–729 (ETPKQAAVLG…ARAVGDLKTA (419 aa)). NAD(+) is bound by residues methionine 324, aspartate 343, 400–402 (VVE), lysine 407, and serine 429. Histidine 450 serves as the catalytic For 3-hydroxyacyl-CoA dehydrogenase activity. Asparagine 453 contributes to the NAD(+) binding site. 2 residues coordinate substrate: asparagine 500 and tyrosine 660.

In the N-terminal section; belongs to the enoyl-CoA hydratase/isomerase family. This sequence in the C-terminal section; belongs to the 3-hydroxyacyl-CoA dehydrogenase family. In terms of assembly, heterotetramer of two alpha chains (FadB) and two beta chains (FadA).

It catalyses the reaction a (3S)-3-hydroxyacyl-CoA + NAD(+) = a 3-oxoacyl-CoA + NADH + H(+). The enzyme catalyses a (3S)-3-hydroxyacyl-CoA = a (2E)-enoyl-CoA + H2O. The catalysed reaction is a 4-saturated-(3S)-3-hydroxyacyl-CoA = a (3E)-enoyl-CoA + H2O. It carries out the reaction (3S)-3-hydroxybutanoyl-CoA = (3R)-3-hydroxybutanoyl-CoA. It catalyses the reaction a (3Z)-enoyl-CoA = a 4-saturated (2E)-enoyl-CoA. The enzyme catalyses a (3E)-enoyl-CoA = a 4-saturated (2E)-enoyl-CoA. The protein operates within lipid metabolism; fatty acid beta-oxidation. Functionally, involved in the aerobic and anaerobic degradation of long-chain fatty acids via beta-oxidation cycle. Catalyzes the formation of 3-oxoacyl-CoA from enoyl-CoA via L-3-hydroxyacyl-CoA. It can also use D-3-hydroxyacyl-CoA and cis-3-enoyl-CoA as substrate. In Escherichia fergusonii (strain ATCC 35469 / DSM 13698 / CCUG 18766 / IAM 14443 / JCM 21226 / LMG 7866 / NBRC 102419 / NCTC 12128 / CDC 0568-73), this protein is Fatty acid oxidation complex subunit alpha.